Consider the following 2058-residue polypeptide: Unconventional myosin-X (2058 aa).

M1 is subject to N-acetylmethionine. The Myosin motor domain maps to 63 to 739; the sequence is EGVDDMASLT…LEQKLEKRRE (677 aa). ATP contacts are provided by residues N104, Y113, 160–165, and N215; that span reads GAGKTE. The actin-binding stretch occupies residues 619-641; it reads LHSLMATLSSSNPFFVRCIKPNM. IQ domains are found at residues 742-763, 764-787, and 788-817; these read VSHA…KQYR, KVLY…RFLH, and LKKA…EKRE. The SAH stretch occupies residues 814–883; it reads EKREQEEKKK…LTRELEKQKE (70 aa). Disordered stretches follow at residues 819-840 and 847-866; these read EEKK…RERE and ELRA…EALQ. The segment covering 847–861 has biased composition (basic and acidic residues); it reads ELRAQQEEETRKQQE. The stretch at 884–934 forms a coiled coil; sequence NKQVEEILRLEKEIEDLQRMKEQQELSLTEASLQKLQERRDQELRRLEEEA. 3 positions are modified to phosphoserine: S962, S965, and S968. The disordered stretch occupies residues 964–1090; it reads GSEFSSELAE…DLPSPDGDYD (127 aa). Over residues 989-1003 the composition is skewed to acidic residues; sequence PEEEVDEGFEADDDA. Positions 1040–1049 are enriched in polar residues; it reads VVPTSPSADS. Residues 1060 to 1071 are compositionally biased toward low complexity; the sequence is SGSLHNSSSGES. The residue at position 1158 (T1158) is a Phosphothreonine. PH domains follow at residues 1212-1310 and 1392-1497; these read EALK…QVHA and EFIV…NVTD. Residues 1547 to 1695 enclose the MyTH4 domain; it reads LPYGDINLNL…PSRDEIEALI (149 aa). Residues 1700 to 2044 form the FERM domain; sequence MTSTVYCHGG…AYISMIVKKR (345 aa).

Belongs to the TRAFAC class myosin-kinesin ATPase superfamily. Myosin family. In terms of assembly, monomer, when in an inactive conformation in the cytosol. Homodimer in its active, membrane-bound conformation; antiparallel coiled coil-mediated dimer formation. Interacts strongly with CALM3 and weakly with CALM, the CALM3 interaction is essential for function in filopodial extension and motility. Interacts with ECPAS. Interacts with NEO1. Interacts with ITGB1 and ITGB3. Interacts with VASP. Interacts with DCC and ITGB5; the presence of DCC inhibits ITGB5 binding. Interacts with tubulin; ITGB5 or DCC binding inhibits tubulin binding. In terms of processing, the initiator methionine for isoform Headless is removed. Ubiquitous.

The protein resides in the cytoplasm. Its subcellular location is the cytosol. It localises to the cell projection. It is found in the lamellipodium. The protein localises to the ruffle. The protein resides in the cytoskeleton. Its subcellular location is the filopodium tip. It localises to the cell cortex. It is found in the filopodium membrane. Its function is as follows. Myosins are actin-based motor molecules with ATPase activity. Unconventional myosins serve in intracellular movements. MYO10 binds to actin filaments and actin bundles and functions as a plus end-directed motor. Moves with higher velocity and takes larger steps on actin bundles than on single actin filaments. The tail domain binds to membranous compartments containing phosphatidylinositol 3,4,5-trisphosphate or integrins, and mediates cargo transport along actin filaments. Regulates cell shape, cell spreading and cell adhesion. Stimulates the formation and elongation of filopodia. In hippocampal neurons it induces the formation of dendritic filopodia by trafficking the actin-remodeling protein VASP to the tips of filopodia, where it promotes actin elongation. Plays a role in formation of the podosome belt in osteoclasts. Functions as a dominant-negative regulator of isoform 1, suppressing its filopodia-inducing and axon outgrowth-promoting activities. In hippocampal neurons, it increases VASP retention in spine heads to induce spine formation and spine head expansion. This Homo sapiens (Human) protein is Unconventional myosin-X (MYO10).